Reading from the N-terminus, the 207-residue chain is Large ribosomal subunit protein bL25 (207 aa).

It belongs to the bacterial ribosomal protein bL25 family. CTC subfamily. In terms of assembly, part of the 50S ribosomal subunit; part of the 5S rRNA/L5/L18/L25 subcomplex. Contacts the 5S rRNA. Binds to the 5S rRNA independently of L5 and L18.

This is one of the proteins that binds to the 5S RNA in the ribosome where it forms part of the central protuberance. The protein is Large ribosomal subunit protein bL25 of Bordetella petrii (strain ATCC BAA-461 / DSM 12804 / CCUG 43448).